The sequence spans 163 residues: Retinoic acid receptor responder protein 2 (163 aa).

An N-terminal signal peptide occupies residues 1–20 (MKYLLISLALWLGMVGIHGT). 3 disulfide bridges follow: Cys79–Cys89, Cys100–Cys119, and Cys103–Cys135. A propeptide spanning residues 158–163 (RALKHK) is cleaved from the precursor.

Secreted in an inactive precursor form, prochemerin, which is proteolytically processed by a variety of extracellular proteases to generate forms with differing levels of bioactivity. For example, the removal of six amino acids results in chemerin-157, which exhibits the highest activity, while removal of seven amino acids results in chemerin-156 which has slightly less activity. Some proteases are able to cleave at more than one site and chemerin forms may be sequentially processed by different enzymes to modulate activity levels. The coordinated expression and activity of chemerin-modifying enzymes is essential for regulating its bioactivation, inactivation and, consequently, biological function. Cathepsin G cleaves seven C-terminal amino acids from prochemerin (chemerin-156), elastase is able to cleave six (chemerin-157), eight (chemerin-155) or eleven (chemerin-152), plasmin cleaves five amino acids (chemerin-158), and tryptase cleaves five (chemerin-158) or eight (chemerin-155). Multiple cleavages might be required to fully activate chemerin, with an initial tryptase cleavage resulting in chemerin with low activity (chemerin-158), and a second cleavage by carboxypeptidase N or B producing highly active chemerin (chemerin-157).

Its subcellular location is the secreted. Functionally, adipocyte-secreted protein (adipokine) that regulates adipogenesis, metabolism and inflammation through activation of the chemokine-like receptor 1 (CMKLR1). Also acts as a ligand for CMKLR2. Can also bind to C-C chemokine receptor-like 2 (CCRL2), but with a lower affinity than it does to CMKLR1 or CMKLR2. Positively regulates adipocyte differentiation, modulates the expression of adipocyte genes involved in lipid and glucose metabolism and might play a role in angiogenesis, a process essential for the expansion of white adipose tissue. Also acts as a pro-inflammatory adipokine, causing an increase in secretion of pro-inflammatory and prodiabetic adipokines, which further impair adipose tissue metabolic function and have negative systemic effects including impaired insulin sensitivity, altered glucose and lipid metabolism, and a decrease in vascular function in other tissues. Can have both pro- and anti-inflammatory properties depending on the modality of enzymatic cleavage by different classes of proteases. Acts as a chemotactic factor for leukocyte populations expressing CMKLR1, particularly immature plasmacytoid dendritic cells, but also immature myeloid DCs, macrophages and natural killer cells. Exerts an anti-inflammatory role by preventing TNF/TNFA-induced VCAM1 expression and monocytes adhesion in vascular endothelial cells. The effect is mediated via inhibiting activation of NF-kappa-B and CRK/p38 through stimulation of AKT1/NOS3 signaling and nitric oxide production. Its dual role in inflammation and metabolism might provide a link Exhibits an antimicrobial function in the skin. In Cricetulus griseus (Chinese hamster), this protein is Retinoic acid receptor responder protein 2 (RARRES2).